A 130-amino-acid polypeptide reads, in one-letter code: Phosphoribosyl-AMP cyclohydrolase (130 aa).

Residue Asp-77 participates in Mg(2+) binding. Cys-78 contacts Zn(2+). Asp-79 and Asp-81 together coordinate Mg(2+). 2 residues coordinate Zn(2+): Cys-95 and Cys-102.

This sequence belongs to the PRA-CH family. As to quaternary structure, homodimer. The cofactor is Mg(2+). It depends on Zn(2+) as a cofactor.

It localises to the cytoplasm. It catalyses the reaction 1-(5-phospho-beta-D-ribosyl)-5'-AMP + H2O = 1-(5-phospho-beta-D-ribosyl)-5-[(5-phospho-beta-D-ribosylamino)methylideneamino]imidazole-4-carboxamide. It participates in amino-acid biosynthesis; L-histidine biosynthesis; L-histidine from 5-phospho-alpha-D-ribose 1-diphosphate: step 3/9. Catalyzes the hydrolysis of the adenine ring of phosphoribosyl-AMP. This is Phosphoribosyl-AMP cyclohydrolase from Pseudomonas entomophila (strain L48).